The primary structure comprises 140 residues: TPT1-like protein (140 aa).

Residues 6-140 (MITYWDLISH…LANFKNYQKT (135 aa)) form the TCTP domain.

This sequence belongs to the TCTP family.

This Homo sapiens (Human) protein is TPT1-like protein.